The following is a 268-amino-acid chain: Undecaprenyl-diphosphatase 1 (268 aa).

7 consecutive transmembrane segments (helical) span residues 5–25 (SIIS…IPVS), 43–63 (GNTF…LVYF), 84–104 (LAVL…HDFI), 107–127 (VLFE…FILL), 184–204 (AAEF…VLDL), 218–238 (LIAV…RSLL), and 247–267 (APFA…LLVI).

Belongs to the UppP family.

The protein resides in the cell inner membrane. The catalysed reaction is di-trans,octa-cis-undecaprenyl diphosphate + H2O = di-trans,octa-cis-undecaprenyl phosphate + phosphate + H(+). Its function is as follows. Catalyzes the dephosphorylation of undecaprenyl diphosphate (UPP). Confers resistance to bacitracin. The chain is Undecaprenyl-diphosphatase 1 from Agrobacterium fabrum (strain C58 / ATCC 33970) (Agrobacterium tumefaciens (strain C58)).